The chain runs to 99 residues: MKIARVCGTVTSTQKEDTLTGVKFLVLQYLGEDGEFLPDYEVAADTVGAGQDEWVLVSRGSAARHIINGTDKPIDAAVVAIIDTVSRDNYLLYSKRTQY.

Positions 1–83 (MKIARVCGTV…IDAAVVAIID (83 aa)) constitute a BMV domain.

Belongs to the CcmL/EutN family. CcmL subfamily. In terms of assembly, homopentamer. May interact with CcmK2, this occurs at very high CcmK2 concentrations. Interacts with full-length CcmM.

The protein localises to the carboxysome. Its function is as follows. Probably forms vertices in the carboxysome, a polyhedral inclusion where RuBisCO (ribulose bisphosphate carboxylase, rbcL-rbcS) is sequestered. Has been modeled to induce curvature upon insertion into an otherwise flat hexagonal molecular layer of CcmK subunits. The chain is Carboxysome shell vertex protein CcmL from Thermosynechococcus vestitus (strain NIES-2133 / IAM M-273 / BP-1).